Consider the following 567-residue polypeptide: Putative laccase-17 (567 aa).

The first 22 residues, 1 to 22, serve as a signal peptide directing secretion; it reads MPSRGCSCWLLSLALLCSLAAA. 2 consecutive Plastocyanin-like domains span residues 30–146 and 158–310; these read VIRE…PRDG and ELAP…YGAA. Asn-76 carries an N-linked (GlcNAc...) asparagine glycan. Residues His-80, His-82, His-125, and His-127 each coordinate Cu cation. Residues Asn-187, Asn-241, Asn-298, Asn-312, Asn-327, Asn-365, Asn-368, Asn-378, Asn-388, and Asn-430 are each glycosylated (N-linked (GlcNAc...) asparagine). In terms of domain architecture, Plastocyanin-like 3 spans 415-551; the sequence is DFPANPPVQF…AMAFLVDDGV (137 aa). Cu cation-binding residues include His-468, His-471, His-473, His-530, Cys-531, His-532, and His-536.

It belongs to the multicopper oxidase family. The cofactor is Cu cation.

It is found in the secreted. The protein resides in the extracellular space. The protein localises to the apoplast. The enzyme catalyses 4 hydroquinone + O2 = 4 benzosemiquinone + 2 H2O. In terms of biological role, lignin degradation and detoxification of lignin-derived products. The sequence is that of Putative laccase-17 (LAC17) from Oryza sativa subsp. japonica (Rice).